The chain runs to 301 residues: t-SNARE affecting a late Golgi compartment protein 2 (301 aa).

The Cytoplasmic segment spans residues 1–279 (MAYRDRTGLY…SHQKNTGRLR (279 aa)). Positions 92–120 (SDKTEQENEIQRLTIQITQDFQRCQKLLQ) form a coiled coil. The t-SNARE coiled-coil homology domain occupies 206-268 (DEQAIRHERA…KSAEKELIKA (63 aa)). A helical; Anchor for type IV membrane protein membrane pass occupies residues 280-300 (FICFLILLIVALIVILAIKLL). A topological domain (vesicular) is located at residue Arg301.

This sequence belongs to the syntaxin family.

Its subcellular location is the golgi apparatus. The protein resides in the trans-Golgi network membrane. It is found in the endosome membrane. Its function is as follows. t-SNARE that functions in transport from the endosome to the late Golgi and on the endocytic pathway. The protein is t-SNARE affecting a late Golgi compartment protein 2 (tlg2) of Schizosaccharomyces pombe (strain 972 / ATCC 24843) (Fission yeast).